Reading from the N-terminus, the 579-residue chain is Maintenance of mitochondrial morphology protein 1 (579 aa).

Topologically, residues 1–43 (MQQPQQQDLQIGLPYAPVQPPIPSPAAYFAYLPSPSRWTFTQG) are lumenal. The helical transmembrane segment at 44 to 64 (LIVGQVSMVIVALLLIRYVIF) threads the bilayer. Residues 65–579 (EDSATALEKE…GLRNRPGFVQ (515 aa)) are Cytoplasmic-facing. Positions 150–391 (LPESADWLNV…WPRYWSLTLP (242 aa)) constitute an SMP-LTD domain. 3 disordered regions span residues 309-332 (VLPT…RSRH), 460-479 (RPSL…SGLR), and 558-579 (SSVL…GFVQ). 2 stretches are compositionally biased toward low complexity: residues 311 to 328 (PTAN…ATPP) and 465 to 476 (SSRPPHVRSSSS).

This sequence belongs to the MMM1 family. In terms of assembly, homodimer. Component of the ER-mitochondria encounter structure (ERMES) or MDM complex, composed of MMM1, MDM10, MDM12 and MDM34. An MMM1 homodimer associates with one molecule of MDM12 on each side in a pairwise head-to-tail manner, and the SMP-LTD domains of MMM1 and MDM12 generate a continuous hydrophobic tunnel for phospholipid trafficking.

Its subcellular location is the endoplasmic reticulum membrane. Functionally, component of the ERMES/MDM complex, which serves as a molecular tether to connect the endoplasmic reticulum (ER) and mitochondria. Components of this complex are involved in the control of mitochondrial shape and protein biogenesis, and function in nonvesicular lipid trafficking between the ER and mitochondria. The MDM12-MMM1 subcomplex functions in the major beta-barrel assembly pathway that is responsible for biogenesis of all outer membrane beta-barrel proteins, and acts in a late step after the SAM complex. The MDM10-MDM12-MMM1 subcomplex further acts in the TOM40-specific pathway after the action of the MDM12-MMM1 complex. Essential for establishing and maintaining the structure of mitochondria and maintenance of mtDNA nucleoids. This Mycosarcoma maydis (Corn smut fungus) protein is Maintenance of mitochondrial morphology protein 1.